The sequence spans 174 residues: MGKITFYEDRGFQGRCYECSSDCPNLQTYFSRCNSIRVDSGCWMLYERPNYQGYQYFLRRGDYPDYQQWMGFSDSIRSCRSIPYTSSHRIRLYERDDYRGLVSELTEDCSCIHDRFRLNEIYSMHVLEGSWVLYEMPNYRGRQYLLRPGDYRRYHDWGAMDAKVGSLRRVMDLY.

Beta/gamma crystallin 'Greek key' domains are found at residues 2–40 (GKIT…RVDS) and 41–83 (GCWM…RSIP). The tract at residues 84 to 87 (YTSS) is connecting peptide. 2 Beta/gamma crystallin 'Greek key' domains span residues 88–128 (HRIR…HVLE) and 129–171 (GSWV…RRVM).

Belongs to the beta/gamma-crystallin family.

Crystallins are the dominant structural components of the vertebrate eye lens. The chain is Gamma-crystallin A (Cryga) from Rattus norvegicus (Rat).